The following is a 171-amino-acid chain: Adenine phosphoribosyltransferase (171 aa).

This sequence belongs to the purine/pyrimidine phosphoribosyltransferase family. Homodimer.

The protein resides in the cytoplasm. It carries out the reaction AMP + diphosphate = 5-phospho-alpha-D-ribose 1-diphosphate + adenine. The protein operates within purine metabolism; AMP biosynthesis via salvage pathway; AMP from adenine: step 1/1. In terms of biological role, catalyzes a salvage reaction resulting in the formation of AMP, that is energically less costly than de novo synthesis. The polypeptide is Adenine phosphoribosyltransferase (Prochlorococcus marinus (strain MIT 9515)).